Consider the following 184-residue polypeptide: Dirigent protein 14 (184 aa).

The first 20 residues, 1–20 (MANQIYLFSLICLSVLLCQS), serve as a signal peptide directing secretion. Cysteine 36 and cysteine 182 are disulfide-bonded. N-linked (GlcNAc...) asparagine glycans are attached at residues asparagine 55 and asparagine 119.

The protein belongs to the plant dirigent protein family. As to quaternary structure, homodimer.

Its subcellular location is the secreted. The protein resides in the extracellular space. The protein localises to the apoplast. Functionally, dirigent proteins impart stereoselectivity on the phenoxy radical-coupling reaction, yielding optically active lignans from two molecules of coniferyl alcohol in the biosynthesis of lignans, flavonolignans, and alkaloids and thus plays a central role in plant secondary metabolism. In Arabidopsis thaliana (Mouse-ear cress), this protein is Dirigent protein 14 (DIR14).